Reading from the N-terminus, the 590-residue chain is MAGAAPGAIMDEDYYGSAAEWGDEADGGQQEDDSGEGEDDAEVQQECLHKFSTRDYIMEPSIFNTLKRYFQAGGSPENVIQLLSENYTAVAQTVNLLAEWLIQTGVEPVQVQETVENHLKSLLIKHFDPRKADSIFTEEGETPAWLEQMIAHTTWRDLFYKLAEAHPDCLMLNFTVKLISDAGYQGEITSVSTACQQLEVFSRVLRTSLATILDGGEENLEKNLPEFAKMVCHGEHTYLFAQAMMSVLAQEEQGGSAVRRIAQEVQRFAQEKGHDASQITLALGTAASYPRACQALGAMLSKGALNPADITVLFKMFTSMDPPPVELIRVPAFLDLFMQSLFKPGARINQDHKHKYIHILAYAASVVETWKKNKRVSINKDELKSTSKAVETVHNLCCNENKGASELVAELSTLYQCIRFPVVAMGVLKWVDWTVSEPRYFQLQTDHTPVHLALLDEISTCHQLLHPQVLQLLVKLFETEHSQLDVMEQLELKKTLLDRMVHLLSRGYVLPVVSYIRKCLEKLDTDISLIRYFVTEVLDVIAPPYTSDFVQLFLPILENDSIAGTIKTEGEHDPVTEFIAHCKSNFIMVN.

Residues 15-43 (YGSAAEWGDEADGGQQEDDSGEGEDDAEV) form a disordered region. Acidic residues predominate over residues 21–43 (WGDEADGGQQEDDSGEGEDDAEV).

The protein belongs to the NELF-D family. As to quaternary structure, the NELF complex is composed of NELFA, NELFB, NELFCD and NELFE; NELFA and NELFCD form a stable subcomplex that binds primarily through NELFCD to the N-terminus of NELFB. Binds RNA which may help to stabilize the NELF complex on nucleic acid. In vitro, the NELFA:NELFCD subcomplex binds to ssDNA and ssRNA in a sequence- and structure-dependent manner. Interacts with ARAF1. Interacts with PCF11. Interacts with NELFB. Interacts with KAT8.

It is found in the nucleus. Its function is as follows. Essential component of the NELF complex, a complex that negatively regulates the elongation of transcription by RNA polymerase II. The NELF complex, which acts via an association with the DSIF complex and causes transcriptional pausing, is counteracted by the P-TEFb kinase complex. The protein is Negative elongation factor D (NELFCD) of Pongo abelii (Sumatran orangutan).